The chain runs to 759 residues: Forkhead box protein M1 (759 aa).

Disordered stretches follow at residues 1–54 and 94–165; these read MRTS…AESS and KGKE…QRQE. Polar residues predominate over residues 36 to 54; sequence PGQQEPTQAQASQDVAESS. Residues 141–151 show a composition bias toward low complexity; it reads LGPKPGAKGVP. Residues lysine 200 and lysine 324 each participate in a glycyl lysine isopeptide (Lys-Gly) (interchain with G-Cter in SUMO2) cross-link. The segment at residues 234 to 326 is a DNA-binding region (fork-head); it reads ERPPYSYMAM…LTLDQVFKPL (93 aa). The interval 328-349 is disordered; sequence PGSPQSPEHLESQQKRPNPELR. Serine 330 carries the phosphoserine modification. Over residues 335 to 349 the composition is skewed to basic and acidic residues; that stretch reads EHLESQQKRPNPELR. Residue lysine 355 forms a Glycyl lysine isopeptide (Lys-Gly) (interchain with G-Cter in SUMO2) linkage. Position 375 is a phosphoserine; by CHEK2 (serine 375). Glycyl lysine isopeptide (Lys-Gly) (interchain with G-Cter in SUMO2) cross-links involve residues lysine 421 and lysine 439. Serine 521 carries the phosphoserine modification. Disordered stretches follow at residues 530-556, 572-643, and 681-706; these read LVTK…CLDE, MEIL…PQGA, and LASD…LQVP. The segment covering 531–542 has biased composition (basic and acidic residues); sequence VTKRREKREVSR. Polar residues predominate over residues 604–613; sequence PVSSTPSKSV. Residue threonine 608 is modified to Phosphothreonine; by CDK1. Position 624 is a phosphothreonine (threonine 624). Phosphoserine; by PLK1 occurs at positions 726 and 735.

In terms of processing, phosphorylated in M (mitotic) phase. Phosphorylation by the checkpoint kinase CHEK2 in response to DNA damage increases the FOXM1 protein stability probably stimulating the transcription of genes involved in DNA repair. Phosphorylated by CDK1 in late S and G2 phases, creating docking sites for the POLO box domains of PLK1. Subsequently, PLK1 binds and phosphorylates FOXM1, leading to activation of transcriptional activity and subsequent enhanced expression of key mitotic regulators. Phosphorylated by GSK3B leading to ubiquitination and proteasomal degradation. As to expression, highly expressed in thymus and testis, but weakly in intestine and lung. Appears to be expressed only in adult organs containing proliferating/cycling cells or in response to growth factors.

It localises to the nucleus. Its function is as follows. Transcription factor regulating the expression of cell cycle genes essential for DNA replication and mitosis. Plays a role in the control of cell proliferation. Also plays a role in DNA break repair, participating in the DNA damage checkpoint response. Promotes transcription of PHB2. In Rattus norvegicus (Rat), this protein is Forkhead box protein M1 (Foxm1).